Consider the following 65-residue polypeptide: Large ribosomal subunit protein bL32 (65 aa).

A compositionally biased stretch (basic residues) spans 1–19 (MAVQKSRKTPSKRGMRRSH). Positions 1-32 (MAVQKSRKTPSKRGMRRSHNALTNPTLSEDQE) are disordered.

The protein belongs to the bacterial ribosomal protein bL32 family.

The chain is Large ribosomal subunit protein bL32 from Ruthia magnifica subsp. Calyptogena magnifica.